The sequence spans 323 residues: Melanocortin receptor 3 (323 aa).

Residues 1–37 are Extracellular-facing; it reads MNASCCLPSVQPTLPNGSEHLQAPFFSNQSSSAFCEQ. N2, N16, and N28 each carry an N-linked (GlcNAc...) asparagine glycan. A helical transmembrane segment spans residues 38–63; sequence VFIKPEVFLSLGIVSLLENILVILAV. At 64 to 75 the chain is on the cytoplasmic side; the sequence is VRNGNLHSPMYF. A helical membrane pass occupies residues 76–100; sequence FLCSLAVADMLVSVSNALETIMIAI. Residues 101-118 lie on the Extracellular side of the membrane; that stretch reads VHSDYLTFEDQFIQHMDN. A helical membrane pass occupies residues 119–140; that stretch reads IFDSMICISLVASICNLLAIAV. Over 141 to 160 the chain is Cytoplasmic; that stretch reads DRYVTIFYALRYHSIMTVRK. The chain crosses the membrane as a helical span at residues 161 to 181; the sequence is ALTLIVAIWVCCGVCGVVFIV. The Extracellular segment spans residues 182 to 186; the sequence is YSESK. Residues 187-210 form a helical membrane-spanning segment; the sequence is MVIVCLITMFFAMMLLMGTLYVHM. Topologically, residues 211-245 are cytoplasmic; sequence FLFARLHVKRIAALPPADGVAPQQHSCMKGAVTIT. A helical transmembrane segment spans residues 246–268; the sequence is ILLGVFIFCWAPFFLHLVLIITC. Residues 269–277 lie on the Extracellular side of the membrane; the sequence is PTNPYCICY. A helical transmembrane segment spans residues 278–301; the sequence is TAHFNTYLVLIMCNSVIDPLIYAF. Residues 302–323 are Cytoplasmic-facing; it reads RSLELRNTFREILCGCNGMNLG. Residue C315 is the site of S-palmitoyl cysteine attachment.

The protein belongs to the G-protein coupled receptor 1 family. Brain, placental, and gut tissues.

It is found in the cell membrane. Functionally, receptor for MSH (alpha, beta and gamma) and ACTH. This receptor is mediated by G proteins which activate adenylate cyclase. Required for expression of anticipatory patterns of activity and wakefulness during periods of limited nutrient availability and for the normal regulation of circadian clock activity in the brain. The sequence is that of Melanocortin receptor 3 (MC3R) from Homo sapiens (Human).